The primary structure comprises 199 residues: 7-methyl-GTP pyrophosphatase (199 aa).

The active-site Proton acceptor is aspartate 74.

This sequence belongs to the Maf family. YceF subfamily. It depends on a divalent metal cation as a cofactor.

The protein resides in the cytoplasm. The catalysed reaction is N(7)-methyl-GTP + H2O = N(7)-methyl-GMP + diphosphate + H(+). Its function is as follows. Nucleoside triphosphate pyrophosphatase that hydrolyzes 7-methyl-GTP (m(7)GTP). May have a dual role in cell division arrest and in preventing the incorporation of modified nucleotides into cellular nucleic acids. The polypeptide is 7-methyl-GTP pyrophosphatase (Albidiferax ferrireducens (strain ATCC BAA-621 / DSM 15236 / T118) (Rhodoferax ferrireducens)).